Reading from the N-terminus, the 382-residue chain is Mannitol-1-phosphate 5-dehydrogenase (382 aa).

Valine 3–glycine 14 contributes to the NAD(+) binding site.

It belongs to the mannitol dehydrogenase family.

The enzyme catalyses D-mannitol 1-phosphate + NAD(+) = beta-D-fructose 6-phosphate + NADH + H(+). This is Mannitol-1-phosphate 5-dehydrogenase from Sodalis glossinidius (strain morsitans).